A 430-amino-acid polypeptide reads, in one-letter code: UDP-N-acetylmuramoylalanine--D-glutamate ligase (430 aa).

105–111 (GSNGKTT) is an ATP binding site.

Belongs to the MurCDEF family.

It localises to the cytoplasm. It carries out the reaction UDP-N-acetyl-alpha-D-muramoyl-L-alanine + D-glutamate + ATP = UDP-N-acetyl-alpha-D-muramoyl-L-alanyl-D-glutamate + ADP + phosphate + H(+). It participates in cell wall biogenesis; peptidoglycan biosynthesis. Cell wall formation. Catalyzes the addition of glutamate to the nucleotide precursor UDP-N-acetylmuramoyl-L-alanine (UMA). This Pseudothermotoga lettingae (strain ATCC BAA-301 / DSM 14385 / NBRC 107922 / TMO) (Thermotoga lettingae) protein is UDP-N-acetylmuramoylalanine--D-glutamate ligase.